Consider the following 325-residue polypeptide: MPPLADASTETLSPAEQAAVRHPEKAHRPDQPIARKPDWIRVKAPGSPEWVETQKIVKEHKLVTVCEEAGCPNIGECWAKKHATFMIMGDTCTRACAFCNVKTGLPNGLDPHEPAHIADAVQKLGLSHVVITSVDRDDLADGGAEHFAQVIRAIREASPKTTIEVLTPDFLRKDGALEIVVAARPDVFNHNLETVPAKYLSVRPGARYFHSIRLLQRVKELDPTIFTKSGIMVGLGETRNEVLQLMDDLRTADVDFLTIGQYLQPTRKHHAVEAFITPDEFAAYAEVANAKGFLLVSASPLTRSSHHAGEDFARLKAARLERLGR.

Residues 1 to 32 (MPPLADASTETLSPAEQAAVRHPEKAHRPDQP) form a disordered region. Over residues 19–32 (AVRHPEKAHRPDQP) the composition is skewed to basic and acidic residues. Positions 66, 71, 77, 92, 96, 99, and 305 each coordinate [4Fe-4S] cluster. A Radical SAM core domain is found at 78-294 (WAKKHATFMI…AEVANAKGFL (217 aa)).

This sequence belongs to the radical SAM superfamily. Lipoyl synthase family. Requires [4Fe-4S] cluster as cofactor.

It localises to the cytoplasm. It carries out the reaction [[Fe-S] cluster scaffold protein carrying a second [4Fe-4S](2+) cluster] + N(6)-octanoyl-L-lysyl-[protein] + 2 oxidized [2Fe-2S]-[ferredoxin] + 2 S-adenosyl-L-methionine + 4 H(+) = [[Fe-S] cluster scaffold protein] + N(6)-[(R)-dihydrolipoyl]-L-lysyl-[protein] + 4 Fe(3+) + 2 hydrogen sulfide + 2 5'-deoxyadenosine + 2 L-methionine + 2 reduced [2Fe-2S]-[ferredoxin]. The protein operates within protein modification; protein lipoylation via endogenous pathway; protein N(6)-(lipoyl)lysine from octanoyl-[acyl-carrier-protein]: step 2/2. Functionally, catalyzes the radical-mediated insertion of two sulfur atoms into the C-6 and C-8 positions of the octanoyl moiety bound to the lipoyl domains of lipoate-dependent enzymes, thereby converting the octanoylated domains into lipoylated derivatives. This Beijerinckia indica subsp. indica (strain ATCC 9039 / DSM 1715 / NCIMB 8712) protein is Lipoyl synthase.